The following is a 728-amino-acid chain: Catalase-peroxidase 1 (728 aa).

An N-terminal signal peptide occupies residues 1–22 (MDKTQSSQGKCPVMHGANSAVA). A cross-link (tryptophyl-tyrosyl-methioninium (Trp-Tyr) (with M-251)) is located at residues 97-225 (WHSAGTYRVA…LAAVMMGLIY (129 aa)). H98 acts as the Proton acceptor in catalysis. Positions 225–251 (YVNPEGVDGKPDPLRTAQDVRVTFARM) form a cross-link, tryptophyl-tyrosyl-methioninium (Tyr-Met) (with W-97). H266 contacts heme b.

Belongs to the peroxidase family. Peroxidase/catalase subfamily. As to quaternary structure, homodimer or homotetramer. Heme b is required as a cofactor. Formation of the three residue Trp-Tyr-Met cross-link is important for the catalase, but not the peroxidase activity of the enzyme.

It catalyses the reaction H2O2 + AH2 = A + 2 H2O. The catalysed reaction is 2 H2O2 = O2 + 2 H2O. Its function is as follows. Bifunctional enzyme with both catalase and broad-spectrum peroxidase activity. This is Catalase-peroxidase 1 from Shewanella sp. (strain MR-4).